Consider the following 438-residue polypeptide: Fibrous sheath-interacting protein 1 (438 aa).

A disordered region spans residues 1 to 111 (MSMDIIKGNL…PEHSDDPKLE (111 aa)). The segment covering 18–32 (SSSRSRPGSRSSNGS) has biased composition (low complexity). Residues 53 to 72 (SGKEGHTSDSRVEERRKISD) show a composition bias toward basic and acidic residues. Residues S71, S88, and S89 each carry the phosphoserine modification. Residues 131-157 (LAKRRIREKEIKKQGLEMRIKLWEELK) adopt a coiled-coil conformation. The disordered stretch occupies residues 354-390 (SQSNKGDMEHDSNEERNTEPTPGEKILRDNKEQRDRE). Composition is skewed to basic and acidic residues over residues 359-371 (GDME…ERNT) and 378-390 (KILR…RDRE).

Belongs to the FSIP1 family.

This is Fibrous sheath-interacting protein 1 (Fsip1) from Rattus norvegicus (Rat).